The primary structure comprises 346 residues: L-threonine dehydratase catabolic TdcB (346 aa).

59–60 is an AMP binding site; it reads FT. Residue lysine 64 is modified to N6-(pyridoxal phosphate)lysine. AMP-binding positions include glutamine 94, 125-126, and asparagine 321; that span reads GY.

It belongs to the serine/threonine dehydratase family. As to quaternary structure, in the native structure, TdcB is in a dimeric form, whereas in the TdcB-AMP complex, it exists in a tetrameric form (dimer of dimers). It depends on pyridoxal 5'-phosphate as a cofactor.

It catalyses the reaction L-threonine = 2-oxobutanoate + NH4(+). It participates in amino-acid degradation; L-threonine degradation via propanoate pathway; propanoate from L-threonine: step 1/4. Each protein molecule can bind up to four molecules of AMP, which act as an allosteric activator to the enzyme. In terms of biological role, catalyzes the anaerobic formation of alpha-ketobutyrate and ammonia from threonine in a two-step reaction. The first step involved a dehydration of threonine and a production of enamine intermediates (aminocrotonate), which tautomerizes to its imine form (iminobutyrate). Both intermediates are unstable and short-lived. The second step is the nonenzymatic hydrolysis of the enamine/imine intermediates to form 2-ketobutyrate and free ammonia. In the low water environment of the cell, the second step is accelerated by RidA. This is L-threonine dehydratase catabolic TdcB (tdcB) from Staphylococcus aureus (strain USA300).